The primary structure comprises 272 residues: Putative phosphoenolpyruvate synthase regulatory protein (272 aa).

151 to 158 (GVSRSGKT) lines the ADP pocket.

This sequence belongs to the pyruvate, phosphate/water dikinase regulatory protein family. PSRP subfamily.

The enzyme catalyses [pyruvate, water dikinase] + ADP = [pyruvate, water dikinase]-phosphate + AMP + H(+). It catalyses the reaction [pyruvate, water dikinase]-phosphate + phosphate + H(+) = [pyruvate, water dikinase] + diphosphate. Functionally, bifunctional serine/threonine kinase and phosphorylase involved in the regulation of the phosphoenolpyruvate synthase (PEPS) by catalyzing its phosphorylation/dephosphorylation. The chain is Putative phosphoenolpyruvate synthase regulatory protein from Desulfotalea psychrophila (strain LSv54 / DSM 12343).